The primary structure comprises 455 residues: Bifunctional protein GlmU (455 aa).

Residues 1–229 form a pyrophosphorylase region; the sequence is MYNCAILLAA…FEETMGVNSR (229 aa). UDP-N-acetyl-alpha-D-glucosamine contacts are provided by residues 8–11, Lys-22, Gln-73, and 78–79; these read LAAG and GT. Asp-103 contacts Mg(2+). Positions 140, 155, 170, and 227 each coordinate UDP-N-acetyl-alpha-D-glucosamine. Position 227 (Asn-227) interacts with Mg(2+). A linker region spans residues 230–250; that stretch reads LQLAEVEAIMRKRINAMHLEN. Residues 251-455 form an N-acetyltransferase region; that stretch reads GVTIIDPNNT…EDWVKKKDEK (205 aa). 2 residues coordinate UDP-N-acetyl-alpha-D-glucosamine: Arg-332 and Lys-350. The active-site Proton acceptor is His-362. Positions 365 and 376 each coordinate UDP-N-acetyl-alpha-D-glucosamine. Residues 385-386, Ala-422, and Arg-439 each bind acetyl-CoA; that span reads NY.

The protein in the N-terminal section; belongs to the N-acetylglucosamine-1-phosphate uridyltransferase family. This sequence in the C-terminal section; belongs to the transferase hexapeptide repeat family. In terms of assembly, homotrimer. The cofactor is Mg(2+).

It is found in the cytoplasm. It carries out the reaction alpha-D-glucosamine 1-phosphate + acetyl-CoA = N-acetyl-alpha-D-glucosamine 1-phosphate + CoA + H(+). It catalyses the reaction N-acetyl-alpha-D-glucosamine 1-phosphate + UTP + H(+) = UDP-N-acetyl-alpha-D-glucosamine + diphosphate. It participates in nucleotide-sugar biosynthesis; UDP-N-acetyl-alpha-D-glucosamine biosynthesis; N-acetyl-alpha-D-glucosamine 1-phosphate from alpha-D-glucosamine 6-phosphate (route II): step 2/2. It functions in the pathway nucleotide-sugar biosynthesis; UDP-N-acetyl-alpha-D-glucosamine biosynthesis; UDP-N-acetyl-alpha-D-glucosamine from N-acetyl-alpha-D-glucosamine 1-phosphate: step 1/1. The protein operates within bacterial outer membrane biogenesis; LPS lipid A biosynthesis. In terms of biological role, catalyzes the last two sequential reactions in the de novo biosynthetic pathway for UDP-N-acetylglucosamine (UDP-GlcNAc). The C-terminal domain catalyzes the transfer of acetyl group from acetyl coenzyme A to glucosamine-1-phosphate (GlcN-1-P) to produce N-acetylglucosamine-1-phosphate (GlcNAc-1-P), which is converted into UDP-GlcNAc by the transfer of uridine 5-monophosphate (from uridine 5-triphosphate), a reaction catalyzed by the N-terminal domain. In Clostridium tetani (strain Massachusetts / E88), this protein is Bifunctional protein GlmU.